Reading from the N-terminus, the 147-residue chain is MPTYAPKAGDTTRSWYVIDATDVVLGRLAVAAANLLRGKHKPTFAPNVDGGDFVIVINADKVAISNEKLRNKMAYSHSGYPGGLRKRSIGELMEKHPDRVVEKAIVGMLPKNKLSRQIQSKLRVYAGPEHPHTAQQPVPFEIKQVAQ.

It belongs to the universal ribosomal protein uL13 family. As to quaternary structure, part of the 50S ribosomal subunit.

Its function is as follows. This protein is one of the early assembly proteins of the 50S ribosomal subunit, although it is not seen to bind rRNA by itself. It is important during the early stages of 50S assembly. In Mycobacterium marinum (strain ATCC BAA-535 / M), this protein is Large ribosomal subunit protein uL13.